Consider the following 314-residue polypeptide: Diisopropyl-fluorophosphatase (314 aa).

Ca(2+) is bound by residues Glu-21, Asn-120, Asn-175, Asp-229, Asp-232, Leu-273, and His-274. His-287 functions as the Proton acceptor in the catalytic mechanism.

As to quaternary structure, monomer. Ca(2+) serves as cofactor.

It carries out the reaction diisopropyl fluorophosphate + H2O = diisopropyl phosphate + fluoride + 2 H(+). With respect to regulation, inhibited by chelating agents. Functionally, biological function and substrate unknown. However, it is capable of acting on phosphorus anhydride bonds (such as phosphorus-halide and phosphorus-cyanide) in organophosphorus compounds (including nerve gases). In Loligo vulgaris (Common European squid), this protein is Diisopropyl-fluorophosphatase.